We begin with the raw amino-acid sequence, 47 residues long: uncharacterized protein (47 aa).

This is an uncharacterized protein from Bacillus subtilis (strain 168).